Here is a 278-residue protein sequence, read N- to C-terminus: HTH-type transcriptional activator RhaS (278 aa).

One can recognise an HTH araC/xylS-type domain in the interval 174–272 (NLLLAWLEDH…NWSPRDIRQG (99 aa)). 2 DNA-binding regions (H-T-H motif) span residues 191-212 (DAVADQFSLSLRTLHRQLKQQT) and 239-262 (VTDIAYHCGFSDSNHFSTLFRREF).

In terms of assembly, binds DNA as a dimer.

Its subcellular location is the cytoplasm. Functionally, activates expression of the rhaBAD and rhaT operons. The chain is HTH-type transcriptional activator RhaS from Escherichia coli O157:H7.